Reading from the N-terminus, the 366-residue chain is Neutral protease 2 homolog MGYG_04094 (366 aa).

The first 19 residues, 1–19, serve as a signal peptide directing secretion; that stretch reads MQILAALSAIGALVATATA. A propeptide spanning residues 20–188 is cleaved from the precursor; the sequence is AAVPNAPAKQ…NKSRSTIDKR (169 aa). Disulfide bonds link cysteine 196–cysteine 267 and cysteine 274–cysteine 292. A Zn(2+)-binding site is contributed by histidine 317. The active site involves glutamate 318. Histidine 321 and aspartate 332 together coordinate Zn(2+).

This sequence belongs to the peptidase M35 family. Zn(2+) serves as cofactor.

It is found in the secreted. It carries out the reaction Preferential cleavage of bonds with hydrophobic residues in P1'. Also 3-Asn-|-Gln-4 and 8-Gly-|-Ser-9 bonds in insulin B chain.. Secreted metalloproteinase that allows assimilation of proteinaceous substrates. Shows high activities on basic nuclear substrates such as histone and protamine. May be involved in virulence. The polypeptide is Neutral protease 2 homolog MGYG_04094 (Arthroderma gypseum (strain ATCC MYA-4604 / CBS 118893) (Microsporum gypseum)).